A 369-amino-acid polypeptide reads, in one-letter code: Homoserine O-succinyltransferase (369 aa).

An important for substrate specificity region spans residues 90–93; it reads GISA. Residues 107–353 enclose the AB hydrolase-1 domain; it reads WWSGAVGVRA…YGHDAFLKED (247 aa). The active-site Nucleophile is the Ser-175. Arg-236 provides a ligand contact to substrate. Catalysis depends on residues Asp-316 and His-346. Substrate is bound at residue Asp-347.

The protein belongs to the AB hydrolase superfamily. MetX family. In terms of assembly, homodimer.

It is found in the cytoplasm. The catalysed reaction is L-homoserine + succinyl-CoA = O-succinyl-L-homoserine + CoA. It functions in the pathway amino-acid biosynthesis; L-methionine biosynthesis via de novo pathway; O-succinyl-L-homoserine from L-homoserine: step 1/1. In terms of biological role, transfers a succinyl group from succinyl-CoA to L-homoserine, forming succinyl-L-homoserine. The polypeptide is Homoserine O-succinyltransferase (Brevundimonas diminuta (strain ATCC 11568 / DSM 7234 / NBRC 12697 / NCIMB 9393 / NCTC 8545)).